A 262-amino-acid polypeptide reads, in one-letter code: Serine/arginine-rich splicing factor 10 (262 aa).

The region spanning 10-88 is the RRM domain; that stretch reads TSLFVRNVAD…RQIEIQFAQG (79 aa). 3 positions are modified to phosphoserine: serine 23, serine 106, and serine 108. The span at 116 to 126 shows a compositional bias: basic and acidic residues; it reads YRRSRSRSYER. Residues 116-262 form a disordered region; sequence YRRSRSRSYE…SWTSPKSSGH (147 aa). Phosphoserine occurs at positions 129, 131, and 133. Residues 134 to 150 are compositionally biased toward low complexity; that stretch reads FDYNYRRSYSPRNSRPT. Serine 158, serine 160, and arginine 168 each carry phosphoserine. Composition is skewed to basic residues over residues 165-186 and 194-207; these read FKHR…SKSQ and KSRS…KTRG. Residues 209–234 show a composition bias toward basic and acidic residues; sequence SKTDSKTHYKSGSRYEKESRKKEPPR. The span at 252–262 shows a compositional bias: low complexity; sequence RSWTSPKSSGH.

The protein belongs to the splicing factor SR family. As to quaternary structure, the phosphorylated but not the dephosphorylated form interacts with TRA2B/SFRS10. The dephosphorylated form interacts with SNRNP70. Isoform 1 interacts with FUS C-terminus. Isoform 3 interacts with FUS C-terminus. Interacts with YTHDC1, leading to inhibit RNA-binding activity of SRSF10. In terms of processing, phosphorylated. Fully dephosphorylated in mitosis and partially dephosphorylated on heat shock. In terms of tissue distribution, widely expressed.

It is found in the nucleus speckle. It localises to the cytoplasm. Functionally, splicing factor that in its dephosphorylated form acts as a general repressor of pre-mRNA splicing. Seems to interfere with the U1 snRNP 5'-splice recognition of SNRNP70. Required for splicing repression in M-phase cells and after heat shock. Also acts as a splicing factor that specifically promotes exon skipping during alternative splicing. Interaction with YTHDC1, a RNA-binding protein that recognizes and binds N6-methyladenosine (m6A)-containing RNAs, prevents SRSF10 from binding to its mRNA-binding sites close to m6A-containing regions, leading to inhibit exon skipping during alternative splicing. May be involved in regulation of alternative splicing in neurons, with isoform 1 acting as a positive and isoform 3 as a negative regulator. The sequence is that of Serine/arginine-rich splicing factor 10 (SRSF10) from Homo sapiens (Human).